We begin with the raw amino-acid sequence, 428 residues long: C4-dicarboxylate transport protein (428 aa).

A run of 9 helical transmembrane segments spans residues 8-28, 44-64, 76-96, 142-162, 184-204, 222-242, 289-309, 326-346, and 352-372; these read SLYVQVLTAIAIGILLGHFYP, LIKMVIAPVIFCTVVTGIAGM, VALLYFEVVSTIALIIGLIIV, IGAFASGNILQVLLFAVLFGF, VIFGIINMIMRLAPIGAFGAM, LIICFYITCILFVVVVLGSIA, VVGLVIPTGYSFNLDGTSIYL, IFHQITLLVVLLLSSKGAAGV, and IVLAATISAVGHLPVAGLALI.

This sequence belongs to the dicarboxylate/amino acid:cation symporter (DAACS) (TC 2.A.23) family.

The protein localises to the cell inner membrane. Functionally, responsible for the transport of dicarboxylates such as succinate, fumarate, and malate from the periplasm across the membrane. This chain is C4-dicarboxylate transport protein, found in Klebsiella pneumoniae subsp. pneumoniae (strain ATCC 700721 / MGH 78578).